Reading from the N-terminus, the 671-residue chain is UvrABC system protein B (671 aa).

The region spanning 25-412 is the Helicase ATP-binding domain; the sequence is EGIEAGLSHQ…AGRVVEQVVR (388 aa). Position 38-45 (38-45) interacts with ATP; the sequence is GVTGSGKT. A Beta-hairpin motif is present at residues 91–114; that stretch reads YYDYYQPEAYVPSSDTFIEKDASI. A Helicase C-terminal domain is found at 429 to 582; the sequence is QVDDLLSEIR…QIAFNEANGI (154 aa). The region spanning 632 to 667 is the UVR domain; that stretch reads TKRIKQLEEKMMQFARDLEFEAAAQLRDEIAQLRER.

This sequence belongs to the UvrB family. In terms of assembly, forms a heterotetramer with UvrA during the search for lesions. Interacts with UvrC in an incision complex.

The protein localises to the cytoplasm. Functionally, the UvrABC repair system catalyzes the recognition and processing of DNA lesions. A damage recognition complex composed of 2 UvrA and 2 UvrB subunits scans DNA for abnormalities. Upon binding of the UvrA(2)B(2) complex to a putative damaged site, the DNA wraps around one UvrB monomer. DNA wrap is dependent on ATP binding by UvrB and probably causes local melting of the DNA helix, facilitating insertion of UvrB beta-hairpin between the DNA strands. Then UvrB probes one DNA strand for the presence of a lesion. If a lesion is found the UvrA subunits dissociate and the UvrB-DNA preincision complex is formed. This complex is subsequently bound by UvrC and the second UvrB is released. If no lesion is found, the DNA wraps around the other UvrB subunit that will check the other stand for damage. In Pseudomonas putida (strain ATCC 47054 / DSM 6125 / CFBP 8728 / NCIMB 11950 / KT2440), this protein is UvrABC system protein B.